Consider the following 287-residue polypeptide: Type 1 encapsulin shell protein EncA (287 aa).

It belongs to the encapsulin family. Family 1 subfamily. The 32 nm encapsulin nanocompartment is formed by 180 subunits; monomers form pentamers which assemble to form shells. There are 36 pores where the pentamers meet as well as 3-fold axis channels and dimer channels. The N-terminus of the protein is inside the shell.

Its subcellular location is the encapsulin nanocompartment. Its function is as follows. Shell component of a type 1, iron-storage encapsulin nanocompartment. Encapsulin nanocompartments are 32 nm in diameter with an iron- and phosphorus-rich core (4Fe:1P) about 24 nm in diameter. Upon expression in E.coli most particles are 32 nm, 20% are 18 nm. The core is filled with an average of 14 dense granules, 5-6 nm in diameter that are not evenly distributed. Each nanocompartment is estimated to hold 30,000-35,000 Fe atoms. The minor proteins EncB, EncC and EncD probably lie against the interior face of the nanocompartment. In Myxococcus xanthus (strain DK1622), this protein is Type 1 encapsulin shell protein EncA.